Consider the following 81-residue polypeptide: Putative defensin-like protein 102 (81 aa).

The signal sequence occupies residues 1-24; it reads MTTTMKTFVAFVLTVFFIMSSAHC. Cystine bridges form between Cys43/Cys78, Cys49/Cys71, Cys57/Cys76, and Cys61/Cys77.

It belongs to the DEFL family.

The protein localises to the secreted. The chain is Putative defensin-like protein 102 from Arabidopsis thaliana (Mouse-ear cress).